The sequence spans 125 residues: Prefoldin subunit beta (125 aa).

It belongs to the prefoldin subunit beta family. As to quaternary structure, heterohexamer of two alpha and four beta subunits.

The protein localises to the cytoplasm. Its function is as follows. Molecular chaperone capable of stabilizing a range of proteins. Seems to fulfill an ATP-independent, HSP70-like function in archaeal de novo protein folding. The polypeptide is Prefoldin subunit beta (Pyrobaculum islandicum (strain DSM 4184 / JCM 9189 / GEO3)).